Here is a 777-residue protein sequence, read N- to C-terminus: Semaphorin-4F (777 aa).

Residues 1 to 40 (MLARAERPRPGPRPPPVSLFPPPSSLLLLLLAMLSAPVCG) form the signal peptide. Residues 41 to 667 (RVPRSVPRTS…PANRAHTVVG (627 aa)) lie on the Extracellular side of the membrane. The Sema domain maps to 48–516 (RTSLPISEAD…SHTEVTQVNT (469 aa)). N-linked (GlcNAc...) asparagine glycosylation occurs at Asn70. Residues Cys118 and Cys128 are joined by a disulfide bond. A glycan (N-linked (GlcNAc...) asparagine) is linked at Asn139. 3 disulfide bridges follow: Cys146-Cys155, Cys279-Cys390, and Cys303-Cys349. N-linked (GlcNAc...) asparagine glycosylation occurs at Asn515. The PSI domain occupies 518-569 (NCGRLQSCSECILAQDPVCAWSFRLDACVAHAGEHRGMVQDIESADVSSLCP). Intrachain disulfides connect Cys519-Cys536, Cys528-Cys545, and Cys593-Cys634. The 56-residue stretch at 586–641 (VGHVVLPCSPSSAWASCVWHQPSGVTSLTPRRDGLEVVVTPGAMGAYACECQEGGA) folds into the Ig-like C2-type domain. Residues 668-688 (AGLVGFFLGVLAASLTLLLIG) form a helical membrane-spanning segment. Over 689 to 777 (RRQQRRRQRE…PLATCDETSI (89 aa)) the chain is Cytoplasmic. Residues 703–742 (DKVGLDLGAPPSGTTSYSQDPPSPSPEDERLPLALGKRGS) form a disordered region. A phosphoserine mark is found at Ser725 and Ser727. Positions 775–777 (TSI) match the PDZ-binding motif.

This sequence belongs to the semaphorin family. In terms of assembly, interacts (via PDZ-binding motif) with DLG4/SAP90 (via PDZ domain 2); this interaction may promote translocation of DLG4/SAP90 to the membrane. As to expression, expressed throughout the adult brain, where it shows particularly strong expression in the hippocampus, corpus callosum, granular layer and deep nuclei of the cerebellum, and the mitral layer of the olfactory bulb (at protein level). At the cellular level, detected in neuronal precursors, postmitotic neurons, pyramidal neurons, and glial cells including mature oligodendocytes and oligodendroglial precursor cells (at protein level).

It localises to the cell membrane. The protein resides in the postsynaptic density. The protein localises to the perikaryon. Its subcellular location is the cell projection. It is found in the dendrite. Its function is as follows. Probable cell surface receptor that regulates oligodendroglial precursor cell migration. Might also regulate differentiation of oligodendroglial precursor cells. Has growth cone collapse activity against retinal ganglion-cell axons. In Mus musculus (Mouse), this protein is Semaphorin-4F (Sema4f).